The chain runs to 185 residues: Ribosome-recycling factor (185 aa).

This sequence belongs to the RRF family.

Its subcellular location is the cytoplasm. In terms of biological role, responsible for the release of ribosomes from messenger RNA at the termination of protein biosynthesis. May increase the efficiency of translation by recycling ribosomes from one round of translation to another. The polypeptide is Ribosome-recycling factor (Ehrlichia chaffeensis (strain ATCC CRL-10679 / Arkansas)).